The following is a 198-amino-acid chain: tRNA (pseudouridine(54)-N(1))-methyltransferase (198 aa).

Residues Leu130, Gly153, 176–181 (LSPLEL), and Cys186 each bind S-adenosyl-L-methionine.

The protein belongs to the methyltransferase superfamily. TrmY family. In terms of assembly, homodimer.

Its subcellular location is the cytoplasm. It carries out the reaction pseudouridine(54) in tRNA + S-adenosyl-L-methionine = N(1)-methylpseudouridine(54) in tRNA + S-adenosyl-L-homocysteine + H(+). Functionally, specifically catalyzes the N1-methylation of pseudouridine at position 54 (Psi54) in tRNAs. The protein is tRNA (pseudouridine(54)-N(1))-methyltransferase of Methanococcus maripaludis (strain C6 / ATCC BAA-1332).